The sequence spans 352 residues: Protein-glutamate methylesterase/protein-glutamine glutaminase (352 aa).

Residues 4-121 (RVLIVDDSAT…YDGIDEIQKE (118 aa)) form the Response regulatory domain. Aspartate 55 bears the 4-aspartylphosphate mark. The CheB-type methylesterase domain occupies 159-351 (AQTTNKLIAI…VKIASLLSER (193 aa)). Catalysis depends on residues serine 171, histidine 197, and aspartate 293.

It belongs to the CheB family. Phosphorylated by CheA. Phosphorylation of the N-terminal regulatory domain activates the methylesterase activity.

It localises to the cytoplasm. It carries out the reaction [protein]-L-glutamate 5-O-methyl ester + H2O = L-glutamyl-[protein] + methanol + H(+). The enzyme catalyses L-glutaminyl-[protein] + H2O = L-glutamyl-[protein] + NH4(+). In terms of biological role, involved in chemotaxis. Part of a chemotaxis signal transduction system that modulates chemotaxis in response to various stimuli. Catalyzes the demethylation of specific methylglutamate residues introduced into the chemoreceptors (methyl-accepting chemotaxis proteins or MCP) by CheR. Also mediates the irreversible deamidation of specific glutamine residues to glutamic acid. This chain is Protein-glutamate methylesterase/protein-glutamine glutaminase, found in Sulfurimonas denitrificans (strain ATCC 33889 / DSM 1251) (Thiomicrospira denitrificans (strain ATCC 33889 / DSM 1251)).